The sequence spans 161 residues: MMRSLAHFINKALEILCISILALMSILVFLNVVLRYGFNSGISITEEISRYLFIWLAFLGAVLAFNENQHVSVTVLVNKLPPFGQAILKFITDMMMLICCYLIIEGSWIQFQLNLNNFAPISGLPQGLTYFASVIAGILVSAILITRLISTIFFIFRGEVK.

4 consecutive transmembrane segments (helical) span residues 13-33 (LEIL…LNVV), 51-71 (YLFI…NQHV), 86-106 (AILK…IIEG), and 135-155 (IAGI…IFFI).

Belongs to the TRAP transporter small permease family.

The protein localises to the cell inner membrane. This Haemophilus influenzae (strain ATCC 51907 / DSM 11121 / KW20 / Rd) protein is Putative TRAP transporter small permease protein HI_1030.